The following is a 148-amino-acid chain: UPF0178 protein lpp0103 (148 aa).

Belongs to the UPF0178 family.

The protein is UPF0178 protein lpp0103 of Legionella pneumophila (strain Paris).